Here is a 226-residue protein sequence, read N- to C-terminus: Transmembrane emp24 domain-containing protein 5 (226 aa).

An N-terminal signal peptide occupies residues 1–24 (MGDKTWLPFPVVLLAALLLPRAAG). Residues 25-193 (FTPSLDSDFT…IQESNFDRVN (169 aa)) lie on the Lumenal side of the membrane. Residues 42–123 (KECFYQPMPL…EKVIFFELIL (82 aa)) form the GOLD domain. The chain crosses the membrane as a helical span at residues 194-214 (FWSMVNLVVMVVVSAIQVYML). Residues 215–226 (KSLFEDKRKSRT) are Cytoplasmic-facing. The Mediates export from ER signature appears at 217–218 (LF).

This sequence belongs to the EMP24/GP25L family. As to quaternary structure, interacts with TMED9 and TMED10.

The protein localises to the endoplasmic reticulum membrane. Its subcellular location is the golgi apparatus. It localises to the cis-Golgi network membrane. The protein resides in the endoplasmic reticulum-Golgi intermediate compartment membrane. Functionally, potential role in vesicular protein trafficking, mainly in the early secretory pathway. Required for the maintenance of the Golgi apparatus; involved in protein exchange between Golgi stacks during assembly. Probably not required for COPI-vesicle-mediated retrograde transport. The protein is Transmembrane emp24 domain-containing protein 5 (TMED5) of Bos taurus (Bovine).